Reading from the N-terminus, the 103-residue chain is Transcriptional regulator WhiB7 (103 aa).

Positions 17, 49, 52, and 58 each coordinate [4Fe-4S] cluster. A 4Fe-4S Wbl-type domain is found at 25 to 82; the sequence is PCHVGDPDLWFAENPGDLERAKALCAGCPIRVQCLTAALERQEPWGVWGGEILDRGSI. Residues 82–103 are disordered; that stretch reads IVARKRPRGRPRKDSGGNPAAA.

This sequence belongs to the WhiB family. [4Fe-4S] cluster serves as cofactor. The Fe-S cluster can be nitrosylated by nitric oxide (NO). Post-translationally, upon Fe-S cluster removal intramolecular disulfide bonds are formed.

The protein resides in the cytoplasm. Acts as a transcriptional regulator. Probably redox-responsive. The apo- but not holo-form probably binds DNA. Participates in maintaining a reduced cytoplasmic (MSH/MSSM) environment under normal growth conditions and directly or indirectly controls the concentration of mycothiol (MSH + MSSM). The sequence is that of Transcriptional regulator WhiB7 (whiB7) from Mycolicibacterium smegmatis (strain ATCC 700084 / mc(2)155) (Mycobacterium smegmatis).